The following is a 560-amino-acid chain: Radial spoke head protein 3 homolog (560 aa).

Disordered stretches follow at residues Arg134–Met186 and Ala225–Gly249. Residues Arg153 to Ser162 are compositionally biased toward polar residues. Positions Asp215 to Leu239 form a coiled coil. A Phosphothreonine; by MAPK1 modification is found at Thr286. Residues Leu331–Met385 are a coiled coil. Disordered regions lie at residues Asn354–Glu375, His473–Glu498, and Asp526–Ser560.

This sequence belongs to the flagellar radial spoke RSP3 family. In terms of assembly, component of the axonemal radial spoke 1 (RS1) and 2 (RS2) complexes, at least composed of spoke head proteins RSPH1, RSPH3, RSPH9 and the cilia-specific component RSPH4A or sperm-specific component RSPH6A, spoke stalk proteins RSPH14, DNAJB13, DYDC1, ROPN1L and NME5, and the RS1 complex-specific anchor protein IQUB. Interacts with IQUB. Interacts with phosphorylated MAPK1. Interacts with MEK1. Interacts with PKA regulatory subunits PRKAR1A and PRKAR1B. Interacts with RSPH1. Interacts with RSPH4A. Interacts with RSPH6A. Interacts with RSPH9. Interacts with LRRC23.

Its subcellular location is the cytoplasm. The protein resides in the cytoskeleton. It localises to the cilium axoneme. It is found in the flagellum axoneme. Functions as part of axonemal radial spoke complexes that play an important part in the motility of sperm and cilia. Functions as a protein kinase A-anchoring protein that scaffolds the cAMP-dependent protein kinase holoenzyme. May serve as a point of convergence for MAPK and PKA signaling in cilia. This chain is Radial spoke head protein 3 homolog (RSPH3), found in Homo sapiens (Human).